Consider the following 142-residue polypeptide: Hemoglobin subunit alpha (142 aa).

One can recognise a Globin domain in the interval 2–142 (VLSPADKTNV…VSTVLTSKYR (141 aa)). Serine 4 carries the post-translational modification Phosphoserine. Lysine 8 bears the N6-succinyllysine mark. Phosphothreonine is present on threonine 9. Residue lysine 12 is modified to N6-succinyllysine. Lysine 17 bears the N6-acetyllysine; alternate mark. Residue lysine 17 is modified to N6-succinyllysine; alternate. Tyrosine 25 carries the phosphotyrosine modification. Residue serine 36 is modified to Phosphoserine. Lysine 41 bears the N6-succinyllysine mark. Serine 50 is modified (phosphoserine). Histidine 59 lines the O2 pocket. Histidine 88 lines the heme b pocket. Serine 103 bears the Phosphoserine mark. Phosphothreonine is present on threonine 109. 2 positions are modified to phosphoserine: serine 125 and serine 132. Residues threonine 135 and threonine 138 each carry the phosphothreonine modification. Serine 139 bears the Phosphoserine mark.

The protein belongs to the globin family. In terms of assembly, heterotetramer of two alpha chains and two beta chains. In terms of tissue distribution, red blood cells.

In terms of biological role, involved in oxygen transport from the lung to the various peripheral tissues. Functionally, hemopressin acts as an antagonist peptide of the cannabinoid receptor CNR1. Hemopressin-binding efficiently blocks cannabinoid receptor CNR1 and subsequent signaling. The sequence is that of Hemoglobin subunit alpha (HBA) from Piliocolobus badius (Western red colobus).